Here is a 460-residue protein sequence, read N- to C-terminus: Tubby-related protein 3 (460 aa).

Disordered stretches follow at residues 37–132 (KKQR…ETAP) and 151–193 (YDEE…GVTA). Residues 151–162 (YDEEPDKEEDEG) are compositionally biased toward acidic residues. The segment covering 166-188 (SSPSARSEESAAASQKAASETGA) has biased composition (low complexity).

This sequence belongs to the TUB family. Associates with the IFT complex A (IFT-A). Interacts with SIRT1. As to expression, widely expressed including eyes and adipose depots.

The protein resides in the nucleus. Its subcellular location is the cell membrane. The protein localises to the cell projection. It localises to the cilium. It is found in the cytoplasm. The protein resides in the secreted. Functionally, negative regulator of the Shh signaling transduction pathway: recruited to primary cilia via association with the IFT complex A (IFT-A) and is required for recruitment of G protein-coupled receptor GPR161 to cilia, a promoter of PKA-dependent basal repression machinery in Shh signaling. Binds to phosphorylated inositide (phosphoinositide) lipids. Both IFT-A- and phosphoinositide-binding properties are required to regulate ciliary G protein-coupled receptor trafficking. During adipogenesis, regulates ciliary trafficking of FFAR4 in preadipocytes. The polypeptide is Tubby-related protein 3 (Mus musculus (Mouse)).